The chain runs to 204 residues: Double homeobox protein A (204 aa).

The homeobox 1 DNA-binding region spans 15–74 (HRRCRTKFTEEQLKILINTFNQKPYPGYATKQKLALEINTEESRIQIWFQNRRARHGFQK). Disordered regions lie at residues 73–101 (QKRPEAETLESSQSQGQDQPGVEFQSREA) and 163–204 (EPVA…ARTW). Polar residues predominate over residues 81–90 (LESSQSQGQD). A DNA-binding region (homeobox 2) is located at residues 101–160 (ARRCRTTYSASQLHTLIKAFMKNPYPGIDSREELAKEIGVPESRVQIWFQNRRSRLLLQR). A compositionally biased stretch (polar residues) spans 184-197 (EDTQNGTNFTSDSH).

Belongs to the paired homeobox family. In terms of tissue distribution, expressed in embryonic stem cells.

The protein resides in the nucleus. Transcription factor that acts as a repressor. This chain is Double homeobox protein A, found in Homo sapiens (Human).